Here is a 732-residue protein sequence, read N- to C-terminus: Acylamino-acid-releasing enzyme (732 aa).

M1 carries the post-translational modification N-acetylmethionine. 2 positions are modified to phosphoserine: S185 and S187. Residues S587, D675, and H707 each act as charge relay system in the active site.

As to quaternary structure, homotetramer. In terms of tissue distribution, expressed in erythrocytes (at protein level).

It is found in the cytoplasm. The enzyme catalyses Cleavage of an N-acetyl or N-formyl amino acid from the N-terminus of a polypeptide.. With respect to regulation, homotetramerization is required for activity. Tetramerization results in the formation of a gated channel which is involved in substrate selection and substrate access to the catalytic sites. Its function is as follows. This enzyme catalyzes the hydrolysis of the N-terminal peptide bond of an N-acetylated peptide to generate an N-acetylated amino acid and a peptide with a free N-terminus. It preferentially cleaves off Ac-Ala, Ac-Met and Ac-Ser. Also, involved in the degradation of oxidized and glycated proteins. This chain is Acylamino-acid-releasing enzyme (APEH), found in Homo sapiens (Human).